Here is a 190-residue protein sequence, read N- to C-terminus: Inosine triphosphate pyrophosphatase (190 aa).

9 to 14 (TGNAKK) is a binding site for ITP. A Mg(2+)-binding site is contributed by Glu-39. ITP is bound by residues Lys-51, 67–68 (DT), Lys-84, 144–147 (FGWD), Lys-167, and 172–173 (HR).

This sequence belongs to the HAM1 NTPase family. In terms of assembly, homodimer. It depends on Mg(2+) as a cofactor. Mn(2+) serves as cofactor.

It is found in the cytoplasm. It catalyses the reaction ITP + H2O = IMP + diphosphate + H(+). The enzyme catalyses dITP + H2O = dIMP + diphosphate + H(+). The catalysed reaction is XTP + H2O = XMP + diphosphate + H(+). Its function is as follows. Pyrophosphatase that hydrolyzes non-canonical purine nucleotides such as inosine triphosphate (ITP), deoxyinosine triphosphate (dITP) or xanthosine 5'-triphosphate (XTP) to their respective monophosphate derivatives. The enzyme does not distinguish between the deoxy- and ribose forms. Probably excludes non-canonical purines from RNA and DNA precursor pools, thus preventing their incorporation into RNA and DNA and avoiding chromosomal lesions. This is Inosine triphosphate pyrophosphatase from Pediculus humanus subsp. corporis (Body louse).